The following is a 497-amino-acid chain: Probable cytosol aminopeptidase (497 aa).

Mn(2+) contacts are provided by K263 and D268. The active site involves K275. Mn(2+) contacts are provided by D286, D345, and E347. R349 is a catalytic residue.

It belongs to the peptidase M17 family. It depends on Mn(2+) as a cofactor.

Its subcellular location is the cytoplasm. It catalyses the reaction Release of an N-terminal amino acid, Xaa-|-Yaa-, in which Xaa is preferably Leu, but may be other amino acids including Pro although not Arg or Lys, and Yaa may be Pro. Amino acid amides and methyl esters are also readily hydrolyzed, but rates on arylamides are exceedingly low.. The enzyme catalyses Release of an N-terminal amino acid, preferentially leucine, but not glutamic or aspartic acids.. In terms of biological role, presumably involved in the processing and regular turnover of intracellular proteins. Catalyzes the removal of unsubstituted N-terminal amino acids from various peptides. The protein is Probable cytosol aminopeptidase of Allorhizobium ampelinum (strain ATCC BAA-846 / DSM 112012 / S4) (Agrobacterium vitis (strain S4)).